We begin with the raw amino-acid sequence, 1210 residues long: Ice nucleation protein (1210 aa).

Residues A165–I1156 form an octapeptide periodicity region.

The protein belongs to the bacterial ice nucleation protein family.

The protein resides in the cell outer membrane. Functionally, ice nucleation proteins enable bacteria to nucleate crystallization in supercooled water. This is Ice nucleation protein (inaW) from Pseudomonas fluorescens.